The chain runs to 175 residues: Methylated-DNA--protein-cysteine methyltransferase (175 aa).

Cysteine 142 (nucleophile; methyl group acceptor) is an active-site residue.

Belongs to the MGMT family.

Its subcellular location is the cytoplasm. The catalysed reaction is a 6-O-methyl-2'-deoxyguanosine in DNA + L-cysteinyl-[protein] = S-methyl-L-cysteinyl-[protein] + a 2'-deoxyguanosine in DNA. The enzyme catalyses a 4-O-methyl-thymidine in DNA + L-cysteinyl-[protein] = a thymidine in DNA + S-methyl-L-cysteinyl-[protein]. Its function is as follows. Involved in the cellular defense against the biological effects of O6-methylguanine (O6-MeG) and O4-methylthymine (O4-MeT) in DNA. Repairs the methylated nucleobase in DNA by stoichiometrically transferring the methyl group to a cysteine residue in the enzyme. This is a suicide reaction: the enzyme is irreversibly inactivated. This chain is Methylated-DNA--protein-cysteine methyltransferase, found in Thermococcus barophilus (strain DSM 11836 / MP).